A 456-amino-acid polypeptide reads, in one-letter code: Hydroxyproline dehydrogenase (456 aa).

Residues Lys310 and Lys320 each carry the N6-acetyllysine modification.

Belongs to the proline oxidase family. Requires FAD as cofactor.

It carries out the reaction trans-4-hydroxy-L-proline + a quinone = (3R,5S)-1-pyrroline-3-hydroxy-5-carboxylate + a quinol + H(+). The catalysed reaction is L-proline + a quinone = (S)-1-pyrroline-5-carboxylate + a quinol + H(+). In terms of biological role, dehydrogenase that converts trans-4-L-hydroxyproline to delta-1-pyrroline-3-hydroxy-5-carboxylate (Hyp) using ubiquinone-10 as the terminal electron acceptor. Can also use proline as a substrate but with a very much lower efficiency. Does not react with other diastereomers of Hyp: trans-4-D-hydroxyproline and cis-4-L-hydroxyproline. Ubiquininone analogs such as menadione, duroquinone and ubiquinone-1 react more efficiently than oxygen as the terminal electron acceptor during catalysis. This chain is Hydroxyproline dehydrogenase, found in Mus musculus (Mouse).